Reading from the N-terminus, the 266-residue chain is Endoplasmic reticulum vesicle protein 25 (266 aa).

The N-terminal stretch at 1 to 26 is a signal peptide; that stretch reads MGSSPQSSTRTLLGLLFLLLVQLSSA. Residues 27-188 lie on the Lumenal side of the membrane; the sequence is LKFDLHASSG…TNESTNERVK (162 aa). The GOLD domain occupies 39 to 129; the sequence is ERCIRNFVFK…YKSVELDVEI (91 aa). The helical transmembrane segment at 189–209 threads the bilayer; that stretch reads WFAFGTMGMLVGLGVWQVVYL. Residues 210–266 are Cytoplasmic-facing; sequence RAYFRYVDFPVSWRVDGVVANCCSCCEQVEASYLRSSRVVFWSPLVMWTRLSWLILR.

It belongs to the EMP24/GP25L family.

Its subcellular location is the endoplasmic reticulum membrane. The protein localises to the golgi apparatus membrane. Its function is as follows. Constituent of COPII-coated endoplasmic reticulum-derived transport vesicles. Required for efficient transport of a subset of secretory proteins to the Golgi. Facilitates retrograde transport from the Golgi to the endoplasmic reticulum. This Aspergillus fumigatus (strain ATCC MYA-4609 / CBS 101355 / FGSC A1100 / Af293) (Neosartorya fumigata) protein is Endoplasmic reticulum vesicle protein 25 (erv25).